We begin with the raw amino-acid sequence, 165 residues long: Large ribosomal subunit protein uL30 (165 aa).

The protein belongs to the universal ribosomal protein uL30 family. In terms of assembly, part of the 50S ribosomal subunit.

The chain is Large ribosomal subunit protein uL30 from Thermoplasma volcanium (strain ATCC 51530 / DSM 4299 / JCM 9571 / NBRC 15438 / GSS1).